A 316-amino-acid polypeptide reads, in one-letter code: Glutathione synthetase (316 aa).

One can recognise an ATP-grasp domain in the interval 125-310 (KLFTAWFSDL…ITGMLMDAIE (186 aa)). 151–207 (WEKHSDIILKPLDGMGGASIFRVKEGDPNLGVIAETLTEHGTRYCMAQNYLPAIKDG) is a binding site for ATP. Residues Glu-281 and Asn-283 each coordinate Mg(2+).

Belongs to the prokaryotic GSH synthase family. As to quaternary structure, homotetramer. It depends on Mg(2+) as a cofactor. Mn(2+) is required as a cofactor.

The enzyme catalyses gamma-L-glutamyl-L-cysteine + glycine + ATP = glutathione + ADP + phosphate + H(+). Its pathway is sulfur metabolism; glutathione biosynthesis; glutathione from L-cysteine and L-glutamate: step 2/2. With respect to regulation, inhibited by 7,8-dihydrofolate, methotrexate and trimethoprim. This Escherichia coli (strain K12) protein is Glutathione synthetase (gshB).